A 132-amino-acid chain; its full sequence is Glycine-rich protein 3 (132 aa).

The first 20 residues, 1–20, serve as a signal peptide directing secretion; that stretch reads MRYAVLLAVVLLLGAFTAEA.

Prismatic layer of shell (at protein level). Expressed primarily in the mantle with highest level in the mantle edge and lower level in the mantle pallium.

It is found in the secreted. The sequence is that of Glycine-rich protein 3 from Pinctada maxima (Silver-lipped pearl oyster).